A 496-amino-acid chain; its full sequence is MKLRELLATVDSVENLPPVLADAEVKGIKTNSHACGAGDLFIGMPGTRVDGGEFWPSAIASGAIAAIVSPQAVEKNPPHDEAVVISSNNMTKACAAIAAAFYGYPGQKLKLVGVTGTNGKTTTTHLIEFFLTKAKLSTALMGTLYTRWPGFEQTATHTTPFAVELQQQLAQAVNAGCEFGVMEVSSHALAQGRVLGCPFEVGVFSNLTQDHLDYHSDMEDYFAAKALLFSPEYLKGRAIINADDTYGQRLIKALSPEKVWSYSVNDSSADLWMSDLSYEPNGVTGTIHTPEGNVSFRSPLVGQYNLENLLAAVGAVLHLGLNLQLIANAIPEFPGVPGRMERVQINPDQDISVIVDYAHTPDSLENLLKAARPFIPGRMICVFGCGGDRDRTKRPKMGKIVAELADLAFVTSDNPRTEDPDRILDDILAGIPDTVQPTVIGDRAIAIRTAILQAQPGDGVLLAGKGHEDYQILGTEKIHFDDREHARAALTEREKL.

S32 is a binding site for UDP-N-acetyl-alpha-D-muramoyl-L-alanyl-D-glutamate. Position 116–122 (116–122) interacts with ATP; it reads GTNGKTT. Residues 158–159, S185, Q191, and R193 contribute to the UDP-N-acetyl-alpha-D-muramoyl-L-alanyl-D-glutamate site; that span reads TT. An N6-carboxylysine modification is found at K225. Meso-2,6-diaminopimelate contacts are provided by residues R389, 413–416, G464, and E468; that span reads DNPR. Residues 413-416 carry the Meso-diaminopimelate recognition motif motif; sequence DNPR.

This sequence belongs to the MurCDEF family. MurE subfamily. It depends on Mg(2+) as a cofactor. Carboxylation is probably crucial for Mg(2+) binding and, consequently, for the gamma-phosphate positioning of ATP.

The protein resides in the cytoplasm. It carries out the reaction UDP-N-acetyl-alpha-D-muramoyl-L-alanyl-D-glutamate + meso-2,6-diaminopimelate + ATP = UDP-N-acetyl-alpha-D-muramoyl-L-alanyl-gamma-D-glutamyl-meso-2,6-diaminopimelate + ADP + phosphate + H(+). It participates in cell wall biogenesis; peptidoglycan biosynthesis. Functionally, catalyzes the addition of meso-diaminopimelic acid to the nucleotide precursor UDP-N-acetylmuramoyl-L-alanyl-D-glutamate (UMAG) in the biosynthesis of bacterial cell-wall peptidoglycan. In Nostoc sp. (strain PCC 7120 / SAG 25.82 / UTEX 2576), this protein is UDP-N-acetylmuramoyl-L-alanyl-D-glutamate--2,6-diaminopimelate ligase.